A 125-amino-acid polypeptide reads, in one-letter code: Cytochrome c-556 (125 aa).

Positions 13, 113, 116, and 117 each coordinate heme. Heme c-binding residues include M13, C113, C116, and H117.

As to quaternary structure, monomer. In terms of processing, binds 1 heme c group covalently per subunit.

In terms of biological role, low-spin monoheme cytochrome c. The polypeptide is Cytochrome c-556 (Agrobacterium tumefaciens (strain apple 185)).